The chain runs to 720 residues: Dedicator of cytokinesis protein 9 (720 aa).

The 453-residue stretch at 186-638 (KSYASTPELR…LSDIIVPRIC (453 aa)) folds into the DOCKER domain. Residues 277 to 638 (DEEASMMEDV…LSDIIVPRIC (362 aa)) form an interaction with CDC42 region.

This sequence belongs to the DOCK family. Homodimer. Interacts preferentially with nucleotide-depleted CDC42.

It localises to the endomembrane system. In terms of biological role, guanine nucleotide-exchange factor (GEF) that activates CDC42 by exchanging bound GDP for free GTP. Overexpression induces filopodia formation. The protein is Dedicator of cytokinesis protein 9 (Dock9) of Rattus norvegicus (Rat).